Reading from the N-terminus, the 935-residue chain is Progesterone receptor (935 aa).

Residues 1–50 form a disordered region; it reads MTELKAKGPRAPHVAGSPSSPKVGSPLPCSQAAGPFPGSQTSDTLPEASA. Positions 1-164 are AF3; mediates transcriptional activation; sequence MTELKAKGPR…PATQRVLSPL (164 aa). Residues 1-568 are modulating, Pro-Rich; sequence MTELKAKGPR…YSFESLPQKI (568 aa). Ser20 carries the phosphoserine modification. Residues 55–59 carry the LXXL motif 1 motif; sequence LDGLL. Residues 62 to 159 form a disordered region; sequence RICQGQDPTD…DPPAAPATQR (98 aa). Ser81 carries the phosphoserine modification. The LXXL motif 2 motif lies at 115–119; sequence LDTLW. Phosphoserine occurs at positions 130 and 162. Residues 165–305 are mediates transcriptional transrepression; it reads MSRSGGKAGD…LATTVTDFIH (141 aa). The Nuclear localization signal motif lies at 183 to 187; the sequence is KVLPR. The disordered stretch occupies residues 185 to 252; that stretch reads LPRGLSPSRQ…ALGGAAAGGG (68 aa). Ser190 bears the Phosphoserine mark. Positions 191–203 are enriched in polar residues; sequence PSRQLLLPTSGSP. Ser213 bears the Phosphoserine mark. Over residues 220–231 the composition is skewed to acidic residues; that stretch reads EVEEEDGSESED. The segment covering 232 to 246 has biased composition (low complexity); sequence SAGPLLKGKPRALGG. The residue at position 294 (Ser294) is a Phosphoserine; by MAPK1. The disordered stretch occupies residues 331–365; the sequence is GGAGAASAFAPPRSSPSASSTPVPGGDFPDCAYAP. Over residues 335–356 the composition is skewed to low complexity; it reads AASAFAPPRSSPSASSTPVPGG. Ser345 is modified (phosphoserine; by MAPK). Lys388 participates in a covalent cross-link: Glycyl lysine isopeptide (Lys-Gly) (interchain with G-Cter in SUMO); alternate. A Glycyl lysine isopeptide (Lys-Gly) (interchain with G-Cter in ubiquitin); alternate cross-link involves residue Lys388. Ser400 is subject to Phosphoserine; by CDK2. Residues 415 to 452 are disordered; it reads PDFPLGPPPSLPPRAPPPRPGEAAVTAAPASASVSSAS. Positions 418–434 are enriched in pro residues; sequence PLGPPPSLPPRAPPPRP. The segment covering 435–452 has biased composition (low complexity); it reads GEAAVTAAPASASVSSAS. The segment at 456–548 is AF1; mediates transcriptional activation; that stretch reads STLECILYKA…VYPPYLNYLR (93 aa). A Glycyl lysine isopeptide (Lys-Gly) (interchain with G-Cter in SUMO) cross-link involves residue Lys533. NR C4-type zinc fingers lie at residues 569 to 589 and 605 to 629; these read CLIC…CGSC and CAGR…LRKC. The segment at residues 569–641 is a DNA-binding region (nuclear receptor); that stretch reads CLICGDEASG…AGMVLGGRKF (73 aa). Ser678 carries the post-translational modification Phosphoserine. Residues 681-915 enclose the NR LBD domain; sequence QDIQLIPPLI…EFPEMMSEVI (235 aa). The tract at residues 689 to 935 is AF2; mediates transcriptional activation; that stretch reads LINLLLSIEP…MVKPLLFHKK (247 aa).

Belongs to the nuclear hormone receptor family. In terms of assembly, interacts with SMARD1 and UNC45A. Interacts with CUEDC2; the interaction promotes ubiquitination, decreases sumoylation, and represses transcriptional activity. Interacts with PIAS3; the interaction promotes sumoylation of PR in a hormone-dependent manner, inhibits DNA-binding, and alters nuclear export. Interacts with SP1; the interaction requires ligand-induced phosphorylation on Ser-344 by ERK1/2-MAPK. Interacts with PRMT2. Interacts with NCOA2 and NCOA1. Interacts with KLF9. Interacts with GTF2B. Phosphorylated on multiple serine sites. Several of these sites are hormone-dependent. Phosphorylation on Ser-294 is highly hormone-dependent and modulates ubiquitination and sumoylation on Lys-388. Phosphorylation on Ser-345 requires induction by hormone. Basal phosphorylation on Ser-81, Ser-162, Ser-190 and Ser-400 is increased in response to progesterone and can be phosphorylated in vitro by the CDK2-A1 complex. Increased levels of phosphorylation on Ser-400 also in the presence of EGF, heregulin, IGF, PMA and FBS. Phosphorylation at this site by CDK2 is ligand-independent, and increases nuclear translocation and transcriptional activity. Phosphorylation at Ser-162 and Ser-294, but not at Ser-190, is impaired during the G(2)/M phase of the cell cycle. Phosphorylation on Ser-345 by ERK1/2 MAPK is required for interaction with SP1. Post-translationally, sumoylation is hormone-dependent and represses transcriptional activity. Sumoylation on all three sites is enhanced by PIAS3. Desumoylated by SENP1. Sumoylation on Lys-388, the main site of sumoylation, is repressed by ubiquitination on the same site, and modulated by phosphorylation at Ser-294. In terms of processing, ubiquitination is hormone-dependent and represses sumoylation on the same site. Promoted by MAPK-mediated phosphorylation on Ser-294. Palmitoylated by ZDHHC7 and ZDHHC21. Palmitoylation is required for plasma membrane targeting and for rapid intracellular signaling via ERK and AKT kinases and cAMP generation.

The protein resides in the nucleus. Its subcellular location is the cytoplasm. Its function is as follows. The steroid hormones and their receptors are involved in the regulation of eukaryotic gene expression and affect cellular proliferation and differentiation in target tissues. Transcriptional activator of several progesteron-dependent promoters in a variety of cell types. Involved in activation of SRC-dependent MAPK signaling on hormone stimulation. The protein is Progesterone receptor (PGR) of Pithecia irrorata (Gray monk saki).